We begin with the raw amino-acid sequence, 404 residues long: Pre-heme d1 synthase (404 aa).

Positions 22-235 constitute a Radical SAM core domain; it reads GTPKPVVIWN…LIARALESAE (214 aa). 7 residues coordinate [4Fe-4S] cluster: Cys36, Cys40, Cys43, Cys340, Cys343, Cys349, and Cys371.

This sequence belongs to the radical SAM superfamily. The cofactor is [4Fe-4S] cluster.

It participates in porphyrin-containing compound metabolism. In terms of biological role, involved in heme d1 biosynthesis. Radical SAM enzyme that catalyzes the removal of two propionate side chains from the intermediate 12,18-didecarboxysiroheme (DDSH) and may introduce the keto functions on rings A and B, yielding the heme d1 precursor dihydro-heme d1. The protein is Pre-heme d1 synthase of Dinoroseobacter shibae (strain DSM 16493 / NCIMB 14021 / DFL 12).